The following is a 158-amino-acid chain: Transcription elongation factor GreA (158 aa).

Positions 47–68 (AEYDAAKEAQGLLELKIKKMEE) form a coiled coil.

The protein belongs to the GreA/GreB family.

Necessary for efficient RNA polymerase transcription elongation past template-encoded arresting sites. The arresting sites in DNA have the property of trapping a certain fraction of elongating RNA polymerases that pass through, resulting in locked ternary complexes. Cleavage of the nascent transcript by cleavage factors such as GreA or GreB allows the resumption of elongation from the new 3'terminus. GreA releases sequences of 2 to 3 nucleotides. The protein is Transcription elongation factor GreA of Flavobacterium psychrophilum (strain ATCC 49511 / DSM 21280 / CIP 103535 / JIP02/86).